We begin with the raw amino-acid sequence, 468 residues long: Glycine--tRNA ligase (468 aa).

2 residues coordinate substrate: Arg-101 and Glu-170. ATP contacts are provided by residues Arg-202–Glu-204, Phe-212–Phe-217, Glu-289–Leu-290, and Gly-333–Arg-336. A substrate-binding site is contributed by Phe-217–Glu-221. Glu-329 to Gly-333 is a binding site for substrate.

It belongs to the class-II aminoacyl-tRNA synthetase family. In terms of assembly, homodimer.

It localises to the cytoplasm. It carries out the reaction tRNA(Gly) + glycine + ATP = glycyl-tRNA(Gly) + AMP + diphosphate. Functionally, catalyzes the attachment of glycine to tRNA(Gly). The chain is Glycine--tRNA ligase from Mycolicibacterium vanbaalenii (strain DSM 7251 / JCM 13017 / BCRC 16820 / KCTC 9966 / NRRL B-24157 / PYR-1) (Mycobacterium vanbaalenii).